The sequence spans 117 residues: Swarming motility protein SwrAA (117 aa).

The protein localises to the cytoplasm. Its function is as follows. Required for swarm cell differentiation. Plays a crucial role in regulating the degree of cell flagellation. The polypeptide is Swarming motility protein SwrAA (swrAA) (Bacillus subtilis (strain 168)).